A 634-amino-acid polypeptide reads, in one-letter code: Threonine--tRNA ligase (634 aa).

The tract at residues 1 to 142 (MQLLLIHSDY…LSRSIRPEGA (142 aa)) is editing domain. Residues 214 to 513 (PHVELMRRLE…TEEGKVPMLP (300 aa)) are catalytic. The Zn(2+) site is built by C306, H358, and H482.

Belongs to the class-II aminoacyl-tRNA synthetase family. In terms of assembly, homodimer. The cofactor is Zn(2+).

It is found in the cytoplasm. It carries out the reaction tRNA(Thr) + L-threonine + ATP = L-threonyl-tRNA(Thr) + AMP + diphosphate + H(+). Its function is as follows. Catalyzes the attachment of threonine to tRNA(Thr) in a two-step reaction: L-threonine is first activated by ATP to form Thr-AMP and then transferred to the acceptor end of tRNA(Thr). Edits incorrectly charged L-seryl-tRNA(Thr) probably via its editing domain (tested with total bovine tRNA). Activates L-serine, but does not detectably transfer it to tRNA (tested with total bovine tRNA). The chain is Threonine--tRNA ligase from Methanosarcina mazei (strain ATCC BAA-159 / DSM 3647 / Goe1 / Go1 / JCM 11833 / OCM 88) (Methanosarcina frisia).